The following is a 204-amino-acid chain: Ribosome maturation factor RimP (204 aa).

Residues 176-204 (GNFDESQFDEIEESEGEEADEAEQPPTKH) form a disordered region. Residues 181 to 198 (SQFDEIEESEGEEADEAE) are compositionally biased toward acidic residues.

Belongs to the RimP family.

The protein resides in the cytoplasm. Functionally, required for maturation of 30S ribosomal subunits. The polypeptide is Ribosome maturation factor RimP (Cereibacter sphaeroides (strain ATCC 17029 / ATH 2.4.9) (Rhodobacter sphaeroides)).